Here is a 325-residue protein sequence, read N- to C-terminus: Methionyl-tRNA formyltransferase (325 aa).

A (6S)-5,6,7,8-tetrahydrofolate-binding site is contributed by 112–115; it reads SLLP.

Belongs to the Fmt family.

The enzyme catalyses L-methionyl-tRNA(fMet) + (6R)-10-formyltetrahydrofolate = N-formyl-L-methionyl-tRNA(fMet) + (6S)-5,6,7,8-tetrahydrofolate + H(+). Attaches a formyl group to the free amino group of methionyl-tRNA(fMet). The formyl group appears to play a dual role in the initiator identity of N-formylmethionyl-tRNA by promoting its recognition by IF2 and preventing the misappropriation of this tRNA by the elongation apparatus. This Roseiflexus sp. (strain RS-1) protein is Methionyl-tRNA formyltransferase.